A 1132-amino-acid chain; its full sequence is Tyrosine-protein kinase JAK2 (1132 aa).

The interval 1-239 is interaction with cytokine/interferon/growth hormone receptors; that stretch reads MGMACLTMTE…RYRFRRFIQQ (239 aa). The 344-residue stretch at 37-380 folds into the FERM domain; sequence PVLLVYLYHS…GYYRLTADAH (344 aa). At Y119 the chain carries Phosphotyrosine; by autocatalysis. Residues Y372 and Y373 each carry the phosphotyrosine modification. Positions 401–482 constitute an SH2; atypical domain; sequence HGPISMDFAI…SLKDLLNCYQ (82 aa). Phosphoserine is present on S523. Residues 545–809 form the Protein kinase 1 domain; sequence LIFNESLGQG…AIIRDLNSLF (265 aa). Residues Y570 and Y813 each carry the phosphotyrosine modification. The 278-residue stretch at 849–1126 folds into the Protein kinase 2 domain; sequence LKFLQQLGKG…RDLALRVDQI (278 aa). Position 855 to 863 (855 to 863) interacts with ATP; it reads LGKGNFGSV. The residue at position 868 (Y868) is a Phosphotyrosine; by autocatalysis. Position 882 (K882) interacts with ATP. Phosphotyrosine; by autocatalysis occurs at positions 966 and 972. D976 functions as the Proton acceptor in the catalytic mechanism. 2 positions are modified to phosphotyrosine; by autocatalysis: Y1007 and Y1008.

It belongs to the protein kinase superfamily. Tyr protein kinase family. JAK subfamily. In terms of assembly, interacts with IL23R, SKB1 and STAM2. Interacts with EPOR. Interacts with LYN. Interacts with SIRPA. Interacts with SH2B1. Interacts with TEC. Interacts with IFNGR2 (via intracellular domain). Interacts with LEPR (Isoform B). Interacts with HSP90AB1; promotes functional activation in a heat shock-dependent manner. Interacts with STRA6. Interacts with RHEX; this interaction occurs in a erythropoietin (EPO)-dependent manner. Interacts with ASB2; the interaction targets JAK2 for Notch-induced proteasomal degradation. The cofactor is Mg(2+). In terms of processing, autophosphorylated, leading to regulate its activity. Leptin promotes phosphorylation on tyrosine residues, including phosphorylation on Tyr-813. Autophosphorylation on Tyr-119 in response to EPO down-regulates its kinase activity. Autophosphorylation on Tyr-868, Tyr-966 and Tyr-972 in response to growth hormone (GH) are required for maximal kinase activity. Also phosphorylated by TEC. Phosphorylated on tyrosine residues in response to interferon gamma signaling. Phosphorylated on tyrosine residues in response to a signaling cascade that is activated by increased cellular retinol. Post-translationally, undergoes Notch-induced ubiquitination and subsequent proteasomal degradation which is mediated by ASB1 or ASB2, the substrate-recognition components of probable ECS E3 ubiquitin-protein ligase complexes.

The protein resides in the endomembrane system. It is found in the cytoplasm. It localises to the nucleus. The catalysed reaction is L-tyrosyl-[protein] + ATP = O-phospho-L-tyrosyl-[protein] + ADP + H(+). Regulated by autophosphorylation, can both activate or decrease activity. Heme regulates its activity by enhancing the phosphorylation on Tyr-1007 and Tyr-1008. Functionally, non-receptor tyrosine kinase involved in various processes such as cell growth, development, differentiation or histone modifications. Mediates essential signaling events in both innate and adaptive immunity. In the cytoplasm, plays a pivotal role in signal transduction via its association with type I receptors such as growth hormone (GHR), prolactin (PRLR), leptin (LEPR), erythropoietin (EPOR), thrombopoietin (THPO); or type II receptors including IFN-alpha, IFN-beta, IFN-gamma and multiple interleukins. Following ligand-binding to cell surface receptors, phosphorylates specific tyrosine residues on the cytoplasmic tails of the receptor, creating docking sites for STATs proteins. Subsequently, phosphorylates the STATs proteins once they are recruited to the receptor. Phosphorylated STATs then form homodimer or heterodimers and translocate to the nucleus to activate gene transcription. For example, cell stimulation with erythropoietin (EPO) during erythropoiesis leads to JAK2 autophosphorylation, activation, and its association with erythropoietin receptor (EPOR) that becomes phosphorylated in its cytoplasmic domain. Then, STAT5 (STAT5A or STAT5B) is recruited, phosphorylated and activated by JAK2. Once activated, dimerized STAT5 translocates into the nucleus and promotes the transcription of several essential genes involved in the modulation of erythropoiesis. Part of a signaling cascade that is activated by increased cellular retinol and that leads to the activation of STAT5 (STAT5A or STAT5B). In addition, JAK2 mediates angiotensin-2-induced ARHGEF1 phosphorylation. Plays a role in cell cycle by phosphorylating CDKN1B. Cooperates with TEC through reciprocal phosphorylation to mediate cytokine-driven activation of FOS transcription. In the nucleus, plays a key role in chromatin by specifically mediating phosphorylation of 'Tyr-41' of histone H3 (H3Y41ph), a specific tag that promotes exclusion of CBX5 (HP1 alpha) from chromatin. Up-regulates the potassium voltage-gated channel activity of KCNA3. This Pongo abelii (Sumatran orangutan) protein is Tyrosine-protein kinase JAK2.